Consider the following 82-residue polypeptide: Consomatin Ar1 (82 aa).

Positions 1-22 (MQTAYWVVVMMMMVWVTAPVSE) are cleaved as a signal peptide. Positions 23 to 60 (GGKLSDVIWGLVPDDLTPQIILQILNASRHAYRRVRPR) are excised as a propeptide. A disulfide bridge connects residues C64 and C69. Position 66 is a D-tryptophan (W66). P70, P71, and P73 each carry 4-hydroxyproline. Residues 74–82 (QWIHPLVKR) constitute a propeptide that is removed on maturation.

It belongs to the conotoxin C superfamily. Consomatin family. As to expression, expressed by the venom duct.

Its subcellular location is the secreted. Its function is as follows. Moderately activates human somatostatin receptors (SSTR) with a preferential activation of SSTR1 and SSTR4. In vivo, does not cause behavioral changes in mice within a few minutes of intracranial injection, but causes a progressive loss of movement thereafter. Four to five hours after injection, mice recover, even with the highest dose tested. Shows antinociception and antihyperalgesia activities in two mouse models of acute pain, most probably by acting outside the central nervous system. The polypeptide is Consomatin Ar1 (Conus arenatus (Sand-dusted cone)).